The chain runs to 394 residues: Tryptophan synthase beta chain (394 aa).

Lys-90 bears the N6-(pyridoxal phosphate)lysine mark.

It belongs to the TrpB family. Tetramer of two alpha and two beta chains. Pyridoxal 5'-phosphate serves as cofactor.

It carries out the reaction (1S,2R)-1-C-(indol-3-yl)glycerol 3-phosphate + L-serine = D-glyceraldehyde 3-phosphate + L-tryptophan + H2O. The protein operates within amino-acid biosynthesis; L-tryptophan biosynthesis; L-tryptophan from chorismate: step 5/5. Functionally, the beta subunit is responsible for the synthesis of L-tryptophan from indole and L-serine. The protein is Tryptophan synthase beta chain of Parabacteroides distasonis (strain ATCC 8503 / DSM 20701 / CIP 104284 / JCM 5825 / NCTC 11152).